The primary structure comprises 805 residues: Leucine--tRNA ligase (805 aa).

The short motif at 40-51 (PYPSGQGLHVGH) is the 'HIGH' region element. The 'KMSKS' region motif lies at 577–581 (KMSKS). Lysine 580 is a binding site for ATP.

The protein belongs to the class-I aminoacyl-tRNA synthetase family.

The protein resides in the cytoplasm. The enzyme catalyses tRNA(Leu) + L-leucine + ATP = L-leucyl-tRNA(Leu) + AMP + diphosphate. This chain is Leucine--tRNA ligase, found in Limosilactobacillus fermentum (strain NBRC 3956 / LMG 18251) (Lactobacillus fermentum).